A 306-amino-acid polypeptide reads, in one-letter code: Formamidopyrimidine-DNA glycosylase (306 aa).

The active-site Schiff-base intermediate with DNA is the P2. E3 serves as the catalytic Proton donor. The Proton donor; for beta-elimination activity role is filled by K58. Positions 114, 136, and 179 each coordinate DNA. The FPG-type zinc finger occupies 270–306 (SVYDREGEACRTSGCRGTVERIVQAGRSTFYCPHCQK). The active-site Proton donor; for delta-elimination activity is the R296.

Belongs to the FPG family. In terms of assembly, monomer. Requires Zn(2+) as cofactor.

The catalysed reaction is Hydrolysis of DNA containing ring-opened 7-methylguanine residues, releasing 2,6-diamino-4-hydroxy-5-(N-methyl)formamidopyrimidine.. The enzyme catalyses 2'-deoxyribonucleotide-(2'-deoxyribose 5'-phosphate)-2'-deoxyribonucleotide-DNA = a 3'-end 2'-deoxyribonucleotide-(2,3-dehydro-2,3-deoxyribose 5'-phosphate)-DNA + a 5'-end 5'-phospho-2'-deoxyribonucleoside-DNA + H(+). Functionally, involved in base excision repair of DNA damaged by oxidation or by mutagenic agents. Acts as a DNA glycosylase that recognizes and removes damaged bases. Has a preference for oxidized purines, such as 7,8-dihydro-8-oxoguanine (8-oxoG). Has AP (apurinic/apyrimidinic) lyase activity and introduces nicks in the DNA strand. Cleaves the DNA backbone by beta-delta elimination to generate a single-strand break at the site of the removed base with both 3'- and 5'-phosphates. This chain is Formamidopyrimidine-DNA glycosylase, found in Sinorhizobium medicae (strain WSM419) (Ensifer medicae).